A 244-amino-acid polypeptide reads, in one-letter code: Glutathione S-transferase theta-2 (244 aa).

Residues 2–82 (GLELYLDLLS…YLSSKYQVAD (81 aa)) form the GST N-terminal domain. Glutathione contacts are provided by residues 40–41 (HM), 53–54 (KV), 66–67 (ES), and 104–107 (DNIR). The GST C-terminal domain occupies 88–230 (DLQARAQVHE…AKKMLPVPPP (143 aa)).

Belongs to the GST superfamily. Theta family. In terms of assembly, homodimer. In liver, highest expression found in central vein limiting plate hepatocytes. Also expressed in interlobular bile duct epithelial cells. In lung, expressed in club cells and ciliated cells of the bronchiolar epithelium and in type II alveolar cells of the lung parenchyma.

The protein resides in the cytoplasm. It localises to the cytosol. Its subcellular location is the nucleus. The enzyme catalyses RX + glutathione = an S-substituted glutathione + a halide anion + H(+). In terms of biological role, conjugation of reduced glutathione to a wide number of exogenous and endogenous hydrophobic electrophiles. The protein is Glutathione S-transferase theta-2 of Mus musculus (Mouse).